A 337-amino-acid chain; its full sequence is MIEADRLIAADNPTFREEDVIDRAIRPKKLDDYQGQDHVRSQMEIFIKAAQMREEALDHLLIFGPPGLGKTTLANIVANEMGVNIRTTSGPVLEKAGDLAALLTNLEENDILFIDEIHRLSPMVEEVLYPAMEDYQLDIMIGEGPAARSIKIDLPPFTLIGATTRAGSLTSPLRDRFGIVQRLEYYKVEDLQHIVQRSADCLNLSMESEGALEVARRARGTPRIANRLLRRVRDYAEVMSDGNISSEIADKALNMLDVDVRGFDYMDRKLLLAIMEKFDGGPVGLDNIAAAIGEERDTIEDVIEPYLIQQGYLQRTPRGRIVSDRAYLHFGIDKPDK.

The interval 4–186 (ADRLIAADNP…FGIVQRLEYY (183 aa)) is large ATPase domain (RuvB-L). ATP contacts are provided by residues Ile-25, Arg-26, Gly-67, Lys-70, Thr-71, Thr-72, 133-135 (EDY), Arg-176, Tyr-186, and Arg-223. Thr-71 serves as a coordination point for Mg(2+). Residues 187 to 257 (KVEDLQHIVQ…IADKALNMLD (71 aa)) form a small ATPAse domain (RuvB-S) region. The interval 260–337 (VRGFDYMDRK…LHFGIDKPDK (78 aa)) is head domain (RuvB-H). DNA is bound by residues Arg-296, Arg-315, and Arg-320.

It belongs to the RuvB family. In terms of assembly, homohexamer. Forms an RuvA(8)-RuvB(12)-Holliday junction (HJ) complex. HJ DNA is sandwiched between 2 RuvA tetramers; dsDNA enters through RuvA and exits via RuvB. An RuvB hexamer assembles on each DNA strand where it exits the tetramer. Each RuvB hexamer is contacted by two RuvA subunits (via domain III) on 2 adjacent RuvB subunits; this complex drives branch migration. In the full resolvosome a probable DNA-RuvA(4)-RuvB(12)-RuvC(2) complex forms which resolves the HJ.

It localises to the cytoplasm. The catalysed reaction is ATP + H2O = ADP + phosphate + H(+). Functionally, the RuvA-RuvB-RuvC complex processes Holliday junction (HJ) DNA during genetic recombination and DNA repair, while the RuvA-RuvB complex plays an important role in the rescue of blocked DNA replication forks via replication fork reversal (RFR). RuvA specifically binds to HJ cruciform DNA, conferring on it an open structure. The RuvB hexamer acts as an ATP-dependent pump, pulling dsDNA into and through the RuvAB complex. RuvB forms 2 homohexamers on either side of HJ DNA bound by 1 or 2 RuvA tetramers; 4 subunits per hexamer contact DNA at a time. Coordinated motions by a converter formed by DNA-disengaged RuvB subunits stimulates ATP hydrolysis and nucleotide exchange. Immobilization of the converter enables RuvB to convert the ATP-contained energy into a lever motion, pulling 2 nucleotides of DNA out of the RuvA tetramer per ATP hydrolyzed, thus driving DNA branch migration. The RuvB motors rotate together with the DNA substrate, which together with the progressing nucleotide cycle form the mechanistic basis for DNA recombination by continuous HJ branch migration. Branch migration allows RuvC to scan DNA until it finds its consensus sequence, where it cleaves and resolves cruciform DNA. This is Holliday junction branch migration complex subunit RuvB from Aliivibrio fischeri (strain ATCC 700601 / ES114) (Vibrio fischeri).